Reading from the N-terminus, the 500-residue chain is Cytochrome P450 2D26 (500 aa).

Serine 249 is subject to Phosphoserine. Cysteine 446 provides a ligand contact to heme.

The protein belongs to the cytochrome P450 family. Requires heme as cofactor.

The protein resides in the endoplasmic reticulum membrane. It localises to the microsome membrane. The enzyme catalyses an organic molecule + reduced [NADPH--hemoprotein reductase] + O2 = an alcohol + oxidized [NADPH--hemoprotein reductase] + H2O + H(+). Functionally, cytochromes P450 are a group of heme-thiolate monooxygenases. In liver microsomes, this enzyme is involved in an NADPH-dependent electron transport pathway. It oxidizes a variety of structurally unrelated compounds, including steroids, fatty acids, and xenobiotics. In Mus musculus (Mouse), this protein is Cytochrome P450 2D26.